We begin with the raw amino-acid sequence, 466 residues long: Glycosyl hydrolase family 109 protein (466 aa).

A signal peptide (tat-type signal) is located at residues 1–30; it reads MENTRRSFLKKVSAAGIGAAGLAMAGNAGA. Residues 59-60, Asp81, 130-133, 151-152, and Asn180 contribute to the NAD(+) site; these read SR, WEWH, and EV. Tyr209 serves as a coordination point for substrate. 241 to 245 is an NAD(+) binding site; sequence AEAQW. Substrate is bound by residues Arg246, 258–261, and Tyr340; that span reads YPTH. NAD(+) is bound at residue Tyr258.

Belongs to the Gfo/Idh/MocA family. Glycosyl hydrolase 109 subfamily. The cofactor is NAD(+). Post-translationally, predicted to be exported by the Tat system. The position of the signal peptide cleavage has not been experimentally proven.

Glycosidase. This Parabacteroides distasonis (strain ATCC 8503 / DSM 20701 / CIP 104284 / JCM 5825 / NCTC 11152) protein is Glycosyl hydrolase family 109 protein.